The primary structure comprises 104 residues: uncharacterized protein (104 aa).

The chain crosses the membrane as a helical span at residues 77–98 (IAAVRANIIICACFFYLFCYCS).

It is found in the membrane. This is an uncharacterized protein from Saccharomyces cerevisiae (strain ATCC 204508 / S288c) (Baker's yeast).